We begin with the raw amino-acid sequence, 140 residues long: Small ribosomal subunit protein eS12 (140 aa).

This sequence belongs to the eukaryotic ribosomal protein eS12 family. As to quaternary structure, part of the small subunit (SSU) processome, composed of more than 70 proteins and the RNA chaperone small nucleolar RNA (snoRNA) U3. Subunit of the 40S ribosomal complex.

It localises to the nucleus. Its subcellular location is the nucleolus. In terms of biological role, part of the small subunit (SSU) processome, first precursor of the small eukaryotic ribosomal subunit. During the assembly of the SSU processome in the nucleolus, many ribosome biogenesis factors, an RNA chaperone and ribosomal proteins associate with the nascent pre-rRNA and work in concert to generate RNA folding, modifications, rearrangements and cleavage as well as targeted degradation of pre-ribosomal RNA by the RNA exosome. Subunit of the 40S ribosomal complex. Involved in cold-warm shock-induced translocation of the RNA exosome components from the nucleolus to nucleoplasm. The polypeptide is Small ribosomal subunit protein eS12 (rps-12) (Caenorhabditis elegans).